We begin with the raw amino-acid sequence, 205 residues long: Ribosome maturation factor RimP (205 aa).

Polar residues predominate over residues 1 to 13 (MSNAEATTSSDRT). The segment at 1–27 (MSNAEATTSSDRTGTGKAEAESVHNPE) is disordered. Residues 18–27 (AEAESVHNPE) are compositionally biased toward basic and acidic residues.

This sequence belongs to the RimP family.

Its subcellular location is the cytoplasm. Its function is as follows. Required for maturation of 30S ribosomal subunits. This is Ribosome maturation factor RimP from Arthrobacter sp. (strain FB24).